Here is a 394-residue protein sequence, read N- to C-terminus: Elongation factor Tu (394 aa).

The 195-residue stretch at 10–204 (KPHVNVGTIG…ALDSYIPTPE (195 aa)) folds into the tr-type G domain. The tract at residues 19 to 26 (GHVDHGKT) is G1. 19 to 26 (GHVDHGKT) lines the GTP pocket. Thr-26 provides a ligand contact to Mg(2+). Positions 60–64 (GITIN) are G2. A G3 region spans residues 81–84 (DCPG). GTP contacts are provided by residues 81–85 (DCPGH) and 136–139 (NKCD). Residues 136 to 139 (NKCD) form a G4 region. The interval 174–176 (SAL) is G5.

Belongs to the TRAFAC class translation factor GTPase superfamily. Classic translation factor GTPase family. EF-Tu/EF-1A subfamily. In terms of assembly, monomer.

It localises to the cytoplasm. It catalyses the reaction GTP + H2O = GDP + phosphate + H(+). In terms of biological role, GTP hydrolase that promotes the GTP-dependent binding of aminoacyl-tRNA to the A-site of ribosomes during protein biosynthesis. The sequence is that of Elongation factor Tu from Neisseria gonorrhoeae (strain ATCC 700825 / FA 1090).